Reading from the N-terminus, the 229-residue chain is Potassium/proton antiporter CemA (229 aa).

The next 3 membrane-spanning stretches (helical) occupy residues 7–27 (FTPL…SFSF), 114–134 (LICF…LVIL), and 189–209 (ILSG…KYWI).

This sequence belongs to the CemA family.

Its subcellular location is the plastid. It is found in the chloroplast inner membrane. It carries out the reaction K(+)(in) + H(+)(out) = K(+)(out) + H(+)(in). Functionally, contributes to K(+)/H(+) antiport activity by supporting proton efflux to control proton extrusion and homeostasis in chloroplasts in a light-dependent manner to modulate photosynthesis. Prevents excessive induction of non-photochemical quenching (NPQ) under continuous-light conditions. Indirectly promotes efficient inorganic carbon uptake into chloroplasts. The protein is Potassium/proton antiporter CemA of Ipomoea purpurea (Common morning glory).